The following is a 263-amino-acid chain: Small ribosomal subunit protein eS4, Y isoform 1 (263 aa).

Residues 42–104 (LPLIIFLRNR…TGEHFRLVYD (63 aa)) enclose the S4 RNA-binding domain.

The protein belongs to the eukaryotic ribosomal protein eS4 family.

The sequence is that of Small ribosomal subunit protein eS4, Y isoform 1 (RPS4Y1) from Monodelphis domestica (Gray short-tailed opossum).